Reading from the N-terminus, the 603-residue chain is Probable HECT-type ubiquitin ligase-interacting protein creD (603 aa).

Disordered stretches follow at residues 375-398 (ELDP…GTLS) and 432-499 (LNIT…MATP). Basic and acidic residues predominate over residues 443 to 455 (TDHESQNDSEHRR). Residues 465–481 (PSSGSNSHSPSSPVLSR) are compositionally biased toward low complexity. The segment covering 482 to 492 (RPSDEVDHEHV) has biased composition (basic and acidic residues).

Belongs to the arrestin family. Interacts with hulA.

Functionally, component of the regulatory network controlling carbon source utilization through ubiquitination and deubiquitination involving creA, creB, creC, creD and acrB. May be involved in signaling by recognizing appropriately phosphorylated substrates via its arrestin domains and then recruit a HECT-type ubiquitin ligase such as hulA, leading to ubiquitination of the substrate, providing a link between ubiquitination and phosphorylation in protein regulation and stability. The polypeptide is Probable HECT-type ubiquitin ligase-interacting protein creD (creD) (Aspergillus flavus (strain ATCC 200026 / FGSC A1120 / IAM 13836 / NRRL 3357 / JCM 12722 / SRRC 167)).